The primary structure comprises 482 residues: Solute carrier family 49 member A3 (482 aa).

Helical transmembrane passes span 41–61, 81–101, 109–129, 150–170, 181–201, 206–226, 264–284, 296–316, 330–350, 355–375, 390–410, and 437–457; these read WFVL…WISF, YLSL…SWLI, AIVF…GAIV, LCAI…SVWF, IASM…PSVV, YIAH…ILAT, VILM…SSFL, LFAG…AFVC, VKTC…VINF, VLVA…SPVG, SSTG…MILF, and TSML…IIFF.

This sequence belongs to the major facilitator superfamily.

It is found in the membrane. In Xenopus tropicalis (Western clawed frog), this protein is Solute carrier family 49 member A3 (slc49a3).